A 198-amino-acid chain; its full sequence is Small ribosomal subunit protein uS4c (198 aa).

Positions 17–40 (TLPGLTSKRPKNRKDSMNRSSSRK) are disordered. Positions 88-154 (MRLDKSFSIG…IKKNIDLFQR (67 aa)) constitute an S4 RNA-binding domain.

The protein belongs to the universal ribosomal protein uS4 family. In terms of assembly, part of the 30S ribosomal subunit. Contacts protein S5. The interaction surface between S4 and S5 is involved in control of translational fidelity.

Its subcellular location is the plastid. The protein resides in the chloroplast. Functionally, one of the primary rRNA binding proteins, it binds directly to 16S rRNA where it nucleates assembly of the body of the 30S subunit. Its function is as follows. With S5 and S12 plays an important role in translational accuracy. This Pinus thunbergii (Japanese black pine) protein is Small ribosomal subunit protein uS4c (rps4).